We begin with the raw amino-acid sequence, 123 residues long: Small ribosomal subunit protein uS13c (123 aa).

A disordered region spans residues 99–123 (GQRTRSNARTRRGAKKTVAGKKLAK). Basic residues predominate over residues 100 to 123 (QRTRSNARTRRGAKKTVAGKKLAK).

This sequence belongs to the universal ribosomal protein uS13 family. As to quaternary structure, part of the 30S ribosomal subunit.

It is found in the plastid. The protein localises to the chloroplast. In terms of biological role, located at the top of the head of the 30S subunit, it contacts several helices of the 16S rRNA. This chain is Small ribosomal subunit protein uS13c, found in Cyanidioschyzon merolae (strain NIES-3377 / 10D) (Unicellular red alga).